A 344-amino-acid chain; its full sequence is N-acetyl-gamma-glutamyl-phosphate reductase (344 aa).

Residue cysteine 149 is part of the active site.

It belongs to the NAGSA dehydrogenase family. Type 1 subfamily.

It localises to the cytoplasm. The enzyme catalyses N-acetyl-L-glutamate 5-semialdehyde + phosphate + NADP(+) = N-acetyl-L-glutamyl 5-phosphate + NADPH + H(+). It functions in the pathway amino-acid biosynthesis; L-arginine biosynthesis; N(2)-acetyl-L-ornithine from L-glutamate: step 3/4. Its function is as follows. Catalyzes the NADPH-dependent reduction of N-acetyl-5-glutamyl phosphate to yield N-acetyl-L-glutamate 5-semialdehyde. In Acidithiobacillus ferrooxidans (strain ATCC 23270 / DSM 14882 / CIP 104768 / NCIMB 8455) (Ferrobacillus ferrooxidans (strain ATCC 23270)), this protein is N-acetyl-gamma-glutamyl-phosphate reductase.